The chain runs to 99 residues: uncharacterized protein (99 aa).

This is an uncharacterized protein from Saccharolobus islandicus (Sulfolobus islandicus).